Reading from the N-terminus, the 352-residue chain is Small ribosomal subunit biogenesis GTPase RsgA 1 (352 aa).

The tract at residues 1–24 (MAKKKKLTQGQVRRVRDNQQKRLK) is disordered. Residues 104–272 (TSVLTRPDYY…LIDSPGVREF (169 aa)) enclose the CP-type G domain. GTP is bound by residues 160–163 (NKID) and 214–222 (GQSGVGKSS). Zn(2+)-binding residues include cysteine 296, cysteine 301, histidine 303, and cysteine 309.

The protein belongs to the TRAFAC class YlqF/YawG GTPase family. RsgA subfamily. Monomer. Associates with 30S ribosomal subunit, binds 16S rRNA. Zn(2+) serves as cofactor.

It is found in the cytoplasm. Functionally, one of several proteins that assist in the late maturation steps of the functional core of the 30S ribosomal subunit. Helps release RbfA from mature subunits. May play a role in the assembly of ribosomal proteins into the subunit. Circularly permuted GTPase that catalyzes slow GTP hydrolysis, GTPase activity is stimulated by the 30S ribosomal subunit. In Vibrio vulnificus (strain CMCP6), this protein is Small ribosomal subunit biogenesis GTPase RsgA 1.